The sequence spans 133 residues: uncharacterized protein (133 aa).

A run of 2 helical transmembrane segments spans residues 8–28 (MVLL…LLLL) and 46–66 (SFSI…SIGA).

The protein localises to the membrane. This is an uncharacterized protein from Saccharomyces cerevisiae (strain ATCC 204508 / S288c) (Baker's yeast).